Reading from the N-terminus, the 99-residue chain is Transcription and mRNA export factor SUS1 (99 aa).

This sequence belongs to the ENY2 family. Component of the nuclear pore complex (NPC)-associated TREX-2 complex (transcription and export complex 2), composed of at least SUS1, SAC3, THP1, SEM1, and CDC31. TREX-2 contains 2 SUS1 chains. The TREX-2 complex interacts with the nucleoporin NUP1. Component of the 1.8 MDa SAGA transcription coactivator-HAT complex. SAGA is built of 5 distinct domains with specialized functions. Within the SAGA complex, SUS1, SGF11, SGF73 and UBP8 form an additional subcomplex of SAGA called the DUB module (deubiquitination module). Interacts directly with THP1, SAC3, SGF11, and with the RNA polymerase II.

The protein localises to the nucleus. The protein resides in the nucleoplasm. It is found in the cytoplasm. It localises to the P-body. Involved in mRNA export coupled transcription activation by association with both the TREX-2 and the SAGA complexes. At the promoters, SAGA is required for recruitment of the basal transcription machinery. It influences RNA polymerase II transcriptional activity through different activities such as TBP interaction and promoter selectivity, interaction with transcription activators, and chromatin modification through histone acetylation and deubiquitination. Within the SAGA complex, participates in a subcomplex required for deubiquitination of H2B and for the maintenance of steady-state H3 methylation levels. The TREX-2 complex functions in docking export-competent ribonucleoprotein particles (mRNPs) to the nuclear entrance of the nuclear pore complex (nuclear basket). TREX-2 participates in mRNA export and accurate chromatin positioning in the nucleus by tethering genes to the nuclear periphery. May also be involved in cytoplasmic mRNA decay by interaction with components of P-bodies. The sequence is that of Transcription and mRNA export factor SUS1 from Eremothecium gossypii (strain ATCC 10895 / CBS 109.51 / FGSC 9923 / NRRL Y-1056) (Yeast).